An 85-amino-acid polypeptide reads, in one-letter code: Small ribosomal subunit protein bS20 (85 aa).

The tract at residues 1–22 (MPQIKSAIKRVKTQNATNKRNA) is disordered. The span at 13 to 22 (TQNATNKRNA) shows a compositional bias: polar residues.

It belongs to the bacterial ribosomal protein bS20 family.

In terms of biological role, binds directly to 16S ribosomal RNA. The chain is Small ribosomal subunit protein bS20 from Lactobacillus acidophilus (strain ATCC 700396 / NCK56 / N2 / NCFM).